Reading from the N-terminus, the 620-residue chain is 1-deoxy-D-xylulose-5-phosphate synthase (620 aa).

Residues His-80 and 121–123 (GHS) contribute to the thiamine diphosphate site. Position 152 (Asp-152) interacts with Mg(2+). Thiamine diphosphate is bound by residues 153 to 154 (GA), Asn-181, Tyr-288, and Glu-370. Asn-181 contributes to the Mg(2+) binding site.

This sequence belongs to the transketolase family. DXPS subfamily. Homodimer. Mg(2+) is required as a cofactor. Thiamine diphosphate serves as cofactor.

The catalysed reaction is D-glyceraldehyde 3-phosphate + pyruvate + H(+) = 1-deoxy-D-xylulose 5-phosphate + CO2. The protein operates within metabolic intermediate biosynthesis; 1-deoxy-D-xylulose 5-phosphate biosynthesis; 1-deoxy-D-xylulose 5-phosphate from D-glyceraldehyde 3-phosphate and pyruvate: step 1/1. In terms of biological role, catalyzes the acyloin condensation reaction between C atoms 2 and 3 of pyruvate and glyceraldehyde 3-phosphate to yield 1-deoxy-D-xylulose-5-phosphate (DXP). This Escherichia coli O157:H7 protein is 1-deoxy-D-xylulose-5-phosphate synthase.